The primary structure comprises 191 residues: Ferric nitrobindin-like protein (191 aa).

The GXWXGXG signature appears at 20–26 (GNWAGAG).

This sequence belongs to the nitrobindin family.

This chain is Ferric nitrobindin-like protein, found in Streptomyces avermitilis (strain ATCC 31267 / DSM 46492 / JCM 5070 / NBRC 14893 / NCIMB 12804 / NRRL 8165 / MA-4680).